A 346-amino-acid polypeptide reads, in one-letter code: Probable WRKY transcription factor 54 (346 aa).

Residues 109–130 are disordered; it reads PVSCNGGDSGESKKKRLGVGKG. Positions 121-130 are enriched in basic residues; the sequence is KKKRLGVGKG. The WRKY DNA-binding region spans 146-214; that stretch reads VEAKSSEDRY…YIGYHTCTAN (69 aa). Positions 267-282 are enriched in basic and acidic residues; sequence VKEEQNNNGDQSKDYY. The segment at 267-286 is disordered; it reads VKEEQNNNGDQSKDYYEGSS.

The protein belongs to the WRKY group III family. As to quaternary structure, interacts with WRKY30. Binds to BZR2/BES1 to cooperatively regulate the expression of target genes. Interacts with ASK7/BIN2. Phosphorylated and destabilized by ASK7/BIN2. Expressed in leaves.

The protein localises to the nucleus. Transcription factor. Interacts specifically with the W box (5'-(T)TGAC[CT]-3'), a frequently occurring elicitor-responsive cis-acting element. Together with WRKY70, negative regulator of developmental senescence, probably via the regulation of several senescence-associated markers genes. Positive regulator of EDS1-dependent defense against E.amylovora. In collaboration with WRKY70, prevents stomatal closure and, consequently, osmotic stress tolerance. Together with WRKY46 and WRKY70, promotes brassinosteroid (BR)-regulated plant growth but prevent drought response by modulating gene expression. Negative regulator of SA biosynthesis. Prevents defense response to the necrotrophic pathogens P.carotovorum and B.cinerea, but promotes defense against biotrophic/hemibiotrophic pathogens P.syringae pv. tomato (Pst) DC3000, probably by regulating negatively the jasmonic acid (JA)/ethylene (ET) and positively the salicylic acid (SA) signaling pathways. This Arabidopsis thaliana (Mouse-ear cress) protein is Probable WRKY transcription factor 54.